We begin with the raw amino-acid sequence, 445 residues long: Chromosomal replication initiator protein DnaA (445 aa).

The tract at residues 1 to 73 (MSTHLTETWE…VNALKLLTSK (73 aa)) is domain I, interacts with DnaA modulators. A domain II region spans residues 73–106 (KKYNIDFIVTTEEKIEKNHNNEKSNIVVNDEMST). The tract at residues 107 to 323 (MLNPKYTFDS…GALIRIVAFS (217 aa)) is domain III, AAA+ region. ATP-binding residues include glycine 151, glycine 153, lysine 154, and threonine 155. The segment at 324 to 445 (SLTNKEISVD…NDLNKRINQK (122 aa)) is domain IV, binds dsDNA.

Belongs to the DnaA family. As to quaternary structure, oligomerizes as a right-handed, spiral filament on DNA at oriC.

It localises to the cytoplasm. Functionally, plays an essential role in the initiation and regulation of chromosomal replication. ATP-DnaA binds to the origin of replication (oriC) to initiate formation of the DNA replication initiation complex once per cell cycle. Binds the DnaA box (a 9 base pair repeat at the origin) and separates the double-stranded (ds)DNA. Forms a right-handed helical filament on oriC DNA; dsDNA binds to the exterior of the filament while single-stranded (ss)DNA is stabiized in the filament's interior. The ATP-DnaA-oriC complex binds and stabilizes one strand of the AT-rich DNA unwinding element (DUE), permitting loading of DNA polymerase. After initiation quickly degrades to an ADP-DnaA complex that is not apt for DNA replication. Binds acidic phospholipids. This Clostridium botulinum (strain Loch Maree / Type A3) protein is Chromosomal replication initiator protein DnaA.